A 184-amino-acid polypeptide reads, in one-letter code: Ribonuclease HII (184 aa).

The region spanning 2–184 is the RNase H type-2 domain; the sequence is AKICGIDEAG…KPKLAQSSLF (183 aa). Residues D8, E9, and D95 each coordinate a divalent metal cation.

This sequence belongs to the RNase HII family. Mn(2+) serves as cofactor. It depends on Mg(2+) as a cofactor.

The protein localises to the cytoplasm. The catalysed reaction is Endonucleolytic cleavage to 5'-phosphomonoester.. In terms of biological role, endonuclease that specifically degrades the RNA of RNA-DNA hybrids. The polypeptide is Ribonuclease HII (Campylobacter concisus (strain 13826)).